The chain runs to 752 residues: Photosystem I P700 chlorophyll a apoprotein A1 (752 aa).

Helical transmembrane passes span 73-96 (IFSAHFGQLAIIFLWLSGMYFHGA), 159-182 (LYATAIGGLFMACLMLFAGWFHYH), 198-222 (MNHHLAGLLGLGCLGWAGHQIHISI), 294-312 (TAHHHLALAVLFLVAGHMY), 349-372 (WHAQLAINLAMMGSLSIIVAHHMY), 388-414 (LSLFTHHMWIGGFCIVGAGAHASIFMV), 436-458 (AIISHLNWVCIFLGFHSFGLYIH), and 533-551 (FMVHHIHAFTIHVTVLILV). Cys-575 and Cys-584 together coordinate [4Fe-4S] cluster. 2 consecutive transmembrane segments (helical) span residues 591–612 (HVFLGLFWMYNSLSIAIFHFSW) and 666–688 (LSAYGLIFLGAHFVWAFSLMFLF). A chlorophyll a'-binding site is contributed by His-677. Chlorophyll a-binding residues include Met-685 and Tyr-693. Phylloquinone is bound at residue Trp-694. The chain crosses the membrane as a helical span at residues 726 to 746 (AVGVAHYLLGGIGTTWAFFLA).

It belongs to the PsaA/PsaB family. The PsaA/B heterodimer binds the P700 chlorophyll special pair and subsequent electron acceptors. PSI consists of a core antenna complex that captures photons, and an electron transfer chain that converts photonic excitation into a charge separation. The eukaryotic PSI reaction center is composed of at least 11 subunits. P700 is a chlorophyll a/chlorophyll a' dimer, A0 is one or more chlorophyll a, A1 is one or both phylloquinones and FX is a shared 4Fe-4S iron-sulfur center. serves as cofactor.

It is found in the plastid. The protein localises to the chloroplast thylakoid membrane. The catalysed reaction is reduced [plastocyanin] + hnu + oxidized [2Fe-2S]-[ferredoxin] = oxidized [plastocyanin] + reduced [2Fe-2S]-[ferredoxin]. Functionally, psaA and PsaB bind P700, the primary electron donor of photosystem I (PSI), as well as the electron acceptors A0, A1 and FX. PSI is a plastocyanin/cytochrome c6-ferredoxin oxidoreductase, converting photonic excitation into a charge separation, which transfers an electron from the donor P700 chlorophyll pair to the spectroscopically characterized acceptors A0, A1, FX, FA and FB in turn. Oxidized P700 is reduced on the lumenal side of the thylakoid membrane by plastocyanin or cytochrome c6. The protein is Photosystem I P700 chlorophyll a apoprotein A1 of Gracilaria tenuistipitata var. liui (Red alga).